The chain runs to 375 residues: EP300-interacting inhibitor of differentiation 3 (375 aa).

The stretch at 23-51 (AWQHLVKQEEEEAVKKEEKEEGEDEEEEG) forms a coiled coil. Positions 30–68 (QEEEEAVKKEEKEEGEDEEEEGSDSSSDDPNPEPPCMHP) are disordered. The span at 42–60 (EEGEDEEEEGSDSSSDDPN) shows a compositional bias: acidic residues.

The protein belongs to the NSE4 family. Component of the SMC5-SMC6 complex which consists at least of SMC5, SMC6, NSMCE2, NSMCE1, NSMCE4A or EID3 and NSMCE3; EID3 seems to be a testis-specific subunit. NSMCE1, NSMCE4A or EID3 and NSMCE3 probably form a subcomplex that bridges the head domains of the SMC5:SMC6 heterodimer. Homodimer, and heterodimer with EID2. Interacts with the C-terminal region of CREBBP.

Its subcellular location is the nucleus. The protein resides in the cytoplasm. It is found in the chromosome. The protein localises to the telomere. In terms of biological role, tissue-specific component of the SMC5-SMC6 complex, a complex involved in repair of DNA double-strand breaks by homologous recombination. The complex may promote sister chromatid homologous recombination by recruiting the SMC1-SMC3 cohesin complex to double-strand breaks. The complex is required for telomere maintenance via recombination and mediates sumoylation of shelterin complex (telosome) components. Its function is as follows. Acts as a repressor of nuclear receptor-dependent transcription possibly by interfering with CREBBP-dependent coactivation. May function as a coinhibitor of other CREBBP/EP300-dependent transcription factors. This is EP300-interacting inhibitor of differentiation 3 from Mus musculus (Mouse).